Here is a 293-residue protein sequence, read N- to C-terminus: Ribosomal protein L11 methyltransferase (293 aa).

S-adenosyl-L-methionine contacts are provided by Thr-145, Gly-166, Asp-188, and Asn-230.

This sequence belongs to the methyltransferase superfamily. PrmA family.

It localises to the cytoplasm. It carries out the reaction L-lysyl-[protein] + 3 S-adenosyl-L-methionine = N(6),N(6),N(6)-trimethyl-L-lysyl-[protein] + 3 S-adenosyl-L-homocysteine + 3 H(+). Its function is as follows. Methylates ribosomal protein L11. The sequence is that of Ribosomal protein L11 methyltransferase from Erwinia tasmaniensis (strain DSM 17950 / CFBP 7177 / CIP 109463 / NCPPB 4357 / Et1/99).